We begin with the raw amino-acid sequence, 744 residues long: Putative pre-mRNA-splicing factor ATP-dependent RNA helicase DHX32 (744 aa).

Met-1 carries the post-translational modification N-acetylmethionine. The tract at residues 1 to 28 (MDEEELDHPNASPEKRYFPESLDSSDGD) is disordered. In terms of domain architecture, Helicase ATP-binding spans 72–270 (MESLLQNQVV…RLIFEIHRSG (199 aa)). 85–92 (GDSKCGKS) contributes to the ATP binding site. The DEAH box motif lies at 185–188 (DDVH). The Helicase C-terminal domain occupies 258–438 (SVIRLIFEIH…SMVLFMKRVD (181 aa)).

It belongs to the DEAD box helicase family. DEAH subfamily.

The protein resides in the nucleus. It localises to the mitochondrion. It carries out the reaction ATP + H2O = ADP + phosphate + H(+). This chain is Putative pre-mRNA-splicing factor ATP-dependent RNA helicase DHX32 (Dhx32), found in Mus musculus (Mouse).